We begin with the raw amino-acid sequence, 111 residues long: Nucleoid-associated protein Cpha266_1171 (111 aa).

This sequence belongs to the YbaB/EbfC family. In terms of assembly, homodimer.

The protein resides in the cytoplasm. It is found in the nucleoid. Its function is as follows. Binds to DNA and alters its conformation. May be involved in regulation of gene expression, nucleoid organization and DNA protection. The sequence is that of Nucleoid-associated protein Cpha266_1171 from Chlorobium phaeobacteroides (strain DSM 266 / SMG 266 / 2430).